The primary structure comprises 313 residues: Porphobilinogen deaminase (313 aa).

Residue Cys-241 is modified to S-(dipyrrolylmethanemethyl)cysteine.

Belongs to the HMBS family. In terms of assembly, monomer. Dipyrromethane is required as a cofactor.

The enzyme catalyses 4 porphobilinogen + H2O = hydroxymethylbilane + 4 NH4(+). Its pathway is porphyrin-containing compound metabolism; protoporphyrin-IX biosynthesis; coproporphyrinogen-III from 5-aminolevulinate: step 2/4. It functions in the pathway porphyrin-containing compound metabolism; chlorophyll biosynthesis. In terms of biological role, tetrapolymerization of the monopyrrole PBG into the hydroxymethylbilane pre-uroporphyrinogen in several discrete steps. The polypeptide is Porphobilinogen deaminase (Chlorobium phaeobacteroides (strain DSM 266 / SMG 266 / 2430)).